Reading from the N-terminus, the 344-residue chain is Phosphoribosylformylglycinamidine cyclo-ligase (344 aa).

It belongs to the AIR synthase family.

It localises to the cytoplasm. The catalysed reaction is 2-formamido-N(1)-(5-O-phospho-beta-D-ribosyl)acetamidine + ATP = 5-amino-1-(5-phospho-beta-D-ribosyl)imidazole + ADP + phosphate + H(+). Its pathway is purine metabolism; IMP biosynthesis via de novo pathway; 5-amino-1-(5-phospho-D-ribosyl)imidazole from N(2)-formyl-N(1)-(5-phospho-D-ribosyl)glycinamide: step 2/2. The chain is Phosphoribosylformylglycinamidine cyclo-ligase from Haemophilus influenzae (strain PittEE).